The chain runs to 344 residues: Methionine import ATP-binding protein MetN 1 (344 aa).

The region spanning 2–241 (IEIRNLSQRF…PHHEVTRALI (240 aa)) is the ABC transporter domain. 38-45 (GRSGAGKS) serves as a coordination point for ATP.

This sequence belongs to the ABC transporter superfamily. Methionine importer (TC 3.A.1.24) family. As to quaternary structure, the complex is composed of two ATP-binding proteins (MetN), two transmembrane proteins (MetI) and a solute-binding protein (MetQ).

It localises to the cell inner membrane. It carries out the reaction L-methionine(out) + ATP + H2O = L-methionine(in) + ADP + phosphate + H(+). It catalyses the reaction D-methionine(out) + ATP + H2O = D-methionine(in) + ADP + phosphate + H(+). Functionally, part of the ABC transporter complex MetNIQ involved in methionine import. Responsible for energy coupling to the transport system. The sequence is that of Methionine import ATP-binding protein MetN 1 from Burkholderia mallei (strain ATCC 23344).